The chain runs to 233 residues: Large ribosomal subunit protein uL1 (233 aa).

This sequence belongs to the universal ribosomal protein uL1 family. Part of the 50S ribosomal subunit.

Binds directly to 23S rRNA. The L1 stalk is quite mobile in the ribosome, and is involved in E site tRNA release. Its function is as follows. Protein L1 is also a translational repressor protein, it controls the translation of the L11 operon by binding to its mRNA. The chain is Large ribosomal subunit protein uL1 from Parvibaculum lavamentivorans (strain DS-1 / DSM 13023 / NCIMB 13966).